The following is a 61-amino-acid chain: Cobrotoxin-c (61 aa).

Disulfide bonds link Cys3-Cys23, Cys17-Cys40, Cys42-Cys53, and Cys54-Cys59.

It belongs to the three-finger toxin family. Short-chain subfamily. Type I alpha-neurotoxin sub-subfamily. Expressed by the venom gland.

The protein resides in the secreted. Produces peripheral paralysis by blocking neuromuscular transmission at the postsynaptic site. Binds to the nicotinic acetylcholine receptor. The sequence is that of Cobrotoxin-c from Naja kaouthia (Monocled cobra).